Reading from the N-terminus, the 317-residue chain is Transaldolase (317 aa).

Lys132 functions as the Schiff-base intermediate with substrate in the catalytic mechanism.

Belongs to the transaldolase family. Type 1 subfamily. In terms of assembly, homodimer.

The protein resides in the cytoplasm. The catalysed reaction is D-sedoheptulose 7-phosphate + D-glyceraldehyde 3-phosphate = D-erythrose 4-phosphate + beta-D-fructose 6-phosphate. It functions in the pathway carbohydrate degradation; pentose phosphate pathway; D-glyceraldehyde 3-phosphate and beta-D-fructose 6-phosphate from D-ribose 5-phosphate and D-xylulose 5-phosphate (non-oxidative stage): step 2/3. In terms of biological role, transaldolase is important for the balance of metabolites in the pentose-phosphate pathway. This Haemophilus influenzae (strain 86-028NP) protein is Transaldolase.